The chain runs to 104 residues: ATP-dependent Clp protease adapter protein ClpS (104 aa).

It belongs to the ClpS family. Binds to the N-terminal domain of the chaperone ClpA.

Its function is as follows. Involved in the modulation of the specificity of the ClpAP-mediated ATP-dependent protein degradation. This is ATP-dependent Clp protease adapter protein ClpS from Desulforapulum autotrophicum (strain ATCC 43914 / DSM 3382 / VKM B-1955 / HRM2) (Desulfobacterium autotrophicum).